We begin with the raw amino-acid sequence, 203 residues long: Akirin-2 (203 aa).

Ser18 and Ser21 each carry phosphoserine. Residues 22–27 (PKRRRC) carry the Nuclear localization signal motif. Phosphoserine is present on Ser57. Positions 115–137 (PHAFLLSGPASPGTPSGTSSPLK) are disordered. A compositionally biased stretch (low complexity) spans 119-135 (LLSGPASPGTPSGTSSP). The short motif at 200–203 (SYVS) is the SYVS motif element.

The protein belongs to the akirin family. As to quaternary structure, homodimer. Interacts with IPO9; the interaction is direct. Associates with 20S and 26S proteasomes. Interacts with SMARCD1; promoting SWI/SNF complex recruitment. Interacts with NFKBIZ. Interacts with YWHAB. Polyubiquitinated. Polyubiquitination is dependent of UBR5 that extends pre-ubiquitinated AKIRIN2.

It is found in the nucleus. The protein resides in the cytoplasm. It localises to the membrane. Its function is as follows. Molecular adapter that acts as a bridge between a variety of multiprotein complexes, and which is involved in embryonic development, immunity, myogenesis and brain development. Plays a key role in nuclear protein degradation by promoting import of proteasomes into the nucleus: directly binds to fully assembled 20S proteasomes at one end and to nuclear import receptor IPO9 at the other end, bridging them together and mediating the import of pre-assembled proteasome complexes through the nuclear pore. Involved in innate immunity by regulating the production of interleukin-6 (IL6) downstream of Toll-like receptor (TLR): acts by bridging the NF-kappa-B inhibitor NFKBIZ and the SWI/SNF complex, leading to promote induction of IL6. Also involved in adaptive immunity by promoting B-cell activation. Involved in brain development: required for the survival and proliferation of cerebral cortical progenitor cells. Involved in myogenesis: required for skeletal muscle formation and skeletal development, possibly by regulating expression of muscle differentiation factors. The sequence is that of Akirin-2 from Bos taurus (Bovine).